The primary structure comprises 553 residues: General alpha-glucoside permease (553 aa).

The segment covering 1 to 21 (MSVDENQLENGQLLSSENEAS) has biased composition (polar residues). The segment at 1–26 (MSVDENQLENGQLLSSENEASSPFKE) is disordered. Residues 1–33 (MSVDENQLENGQLLSSENEASSPFKESIPSRSS) lie on the Cytoplasmic side of the membrane. The chain crosses the membrane as a helical span at residues 34-54 (LYLIALTVSLLGVQLTWSVEL). The Extracellular portion of the chain corresponds to 55 to 72 (GYGTPYLFSLGLRKEWTS). Residues 73–93 (IIWIAGPLTGILIQPIAGILS) form a helical membrane-spanning segment. At 94 to 111 (DRVNSRIGRRRPFMLCAS) the chain is on the cytoplasmic side. The chain crosses the membrane as a helical span at residues 112-132 (LLGTFSLFLMGWAPDICLFIF). Topologically, residues 133-140 (SNEVLMKR) are extracellular. The helical transmembrane segment at 141–161 (VTIVLATISIYLLDVAVNVVM) threads the bilayer. At 162-186 (ASTRSLIVDSVRSDQQHEANSWAGR) the chain is on the cytoplasmic side. A helical transmembrane segment spans residues 187–207 (MIGVGNVLGYLLGYLPLYRIF). Residues 208–216 (SFLNFTQLQ) lie on the Extracellular side of the membrane. A helical membrane pass occupies residues 217 to 237 (VFCVLASISLVLTVTITTIFV). Residues 238–280 (SERRFPPVEHEKSVAGEIFEFFTTMRQSITALPFTLKRICFVQ) lie on the Cytoplasmic side of the membrane. The chain crosses the membrane as a helical span at residues 281–301 (FFAYFGWFPFLFYITTYVGIL). Residues 302–322 (YLRHAPKGHEEDWDMATRQGS) lie on the Extracellular side of the membrane. Residues 323–343 (FALLLFAIISLAANTALPLLL) traverse the membrane as a helical segment. Over 344-424 (EDTEDDEEDE…SKVQIKGLTL (81 aa)) the chain is Cytoplasmic. Residues 368-399 (NDLGNIRTGTNTPRLGNLSETTSFRSENEPSR) are disordered. The segment covering 374-392 (RTGTNTPRLGNLSETTSFR) has biased composition (polar residues). Residues 425-445 (PILWLSSHVLFGVCMLSTIFL) form a helical membrane-spanning segment. Residues 446-452 (QTSWQAQ) lie on the Extracellular side of the membrane. The helical transmembrane segment at 453–473 (AMVAICGLSWACTLWIPYSLF) threads the bilayer. The Cytoplasmic segment spans residues 474–494 (SSEIGKLGLRESSGKMIGVHN). Residues 495 to 515 (VFISAPQVLSTIIATIVFIQS) traverse the membrane as a helical segment. Topologically, residues 516 to 521 (EGSHRD) are extracellular. Residues 522–542 (IADNSIAWVLRIGGISAFLAA) form a helical membrane-spanning segment. At 543-553 (YQCRHLLPINF) the chain is on the cytoplasmic side.

Belongs to the glycoside-pentoside-hexuronide (GPH) cation symporter transporter (TC 2.A.2.4) family.

It localises to the membrane. Functionally, responsible for the transport of maltose and sucrose into the cell, with the concomitant uptake of protons (symport system). The polypeptide is General alpha-glucoside permease (sut1) (Schizosaccharomyces pombe (strain 972 / ATCC 24843) (Fission yeast)).